Reading from the N-terminus, the 1150-residue chain is uncharacterized protein (1150 aa).

This sequence belongs to the TMEM1 family.

This is an uncharacterized protein from Schizosaccharomyces pombe (strain 972 / ATCC 24843) (Fission yeast).